Consider the following 286-residue polypeptide: Thymidylate synthase (286 aa).

Residues arginine 21 and 136 to 137 each bind dUMP; that span reads RR. Cysteine 156 functions as the Nucleophile in the catalytic mechanism. Residues 176-179, asparagine 187, and 217-219 contribute to the dUMP site; these read RSVD and HIY. A (6R)-5,10-methylene-5,6,7,8-tetrahydrofolate-binding site is contributed by aspartate 179. (6R)-5,10-methylene-5,6,7,8-tetrahydrofolate is bound at residue alanine 285.

The protein belongs to the thymidylate synthase family. As to quaternary structure, homodimer.

The catalysed reaction is dUMP + (6R)-5,10-methylene-5,6,7,8-tetrahydrofolate = 7,8-dihydrofolate + dTMP. It participates in pyrimidine metabolism; dTTP biosynthesis. The protein is Thymidylate synthase (TD) of Enterobacteria phage T4 (Bacteriophage T4).